The following is a 280-amino-acid chain: Cis-2,3-dihydrobiphenyl-2,3-diol dehydrogenase (280 aa).

9–33 contacts NAD(+); sequence LVTGGCAGLGRAIVDRFVCEGARVA. Residue Ser142 coordinates substrate. The Proton acceptor role is filled by Tyr155.

The protein belongs to the short-chain dehydrogenases/reductases (SDR) family.

The catalysed reaction is (2R,3S)-3-phenylcyclohexa-3,5-diene-1,2-diol + NAD(+) = biphenyl-2,3-diol + NADH + H(+). It functions in the pathway xenobiotic degradation; biphenyl degradation; 2-hydroxy-2,4-pentadienoate and benzoate from biphenyl: step 2/4. This is Cis-2,3-dihydrobiphenyl-2,3-diol dehydrogenase (bphB) from Rhodococcus globerulus.